The chain runs to 708 residues: Leucine-rich repeat neuronal protein 3 (708 aa).

An N-terminal signal peptide occupies residues 1–22 (MKDMPLRIHVLLGLAITTLVQA). The LRRNT domain maps to 23 to 69 (VDKKVDCPRLCTCEIRPWFTPRSIYMEASTVDCNDLGLLTFPARLPA). Over 23–628 (VDKKVDCPRL…KEYEKNNTTT (606 aa)) the chain is Extracellular. LRR repeat units lie at residues 70-91 (NTQI…TDFP), 93-114 (NLTG…NVKK), 117-138 (QLLS…CLSE), 141-162 (NLQE…AFIG), 165-186 (NLLR…WFDA), 189-210 (NLEI…NFKP), 213-234 (NLRS…ALVG), 237-258 (NLES…ALQK), 261-282 (NLKF…DFSN), 285-304 (HLKE…DSLA), 310-332 (DLRK…AFFR), and 335-358 (KLES…ESLP). N-linked (GlcNAc...) asparagine glycans are attached at residues Asn-93 and Asn-103. A glycan (N-linked (GlcNAc...) asparagine) is linked at Asn-223. One can recognise an LRRCT domain in the interval 368-421 (NPIRCDCVIRWMNMNKTNIRFMEPDSLFCVDPPEFQGQNVRQVHFRDMMEICLP). The N-linked (GlcNAc...) asparagine glycan is linked to Asn-382. Residues 421–514 (PLIAPESFPS…DLKSVMIKVD (94 aa)) form the Ig-like C2-type domain. The cysteines at positions 444 and 496 are disulfide-linked. Residues Asn-522, Asn-579, Asn-608, Asn-624, and Asn-625 are each glycosylated (N-linked (GlcNAc...) asparagine). A Fibronectin type-III domain is found at 523–617 (GSLNIKIRDI…NVTTKGLHPD (95 aa)). A helical transmembrane segment spans residues 629–649 (LMACLGGLLGIIGVICLISCL). Residues 650–708 (SPEMNCDGGHSYVRNYLQKPTFALGELYPPLINLWEAGKEKSTSLKVKATVIGLPTNMS) lie on the Cytoplasmic side of the membrane.

The protein localises to the membrane. This Homo sapiens (Human) protein is Leucine-rich repeat neuronal protein 3 (LRRN3).